Reading from the N-terminus, the 239-residue chain is ATP-dependent dethiobiotin synthetase BioD (239 aa).

15 to 20 (EIGKTF) serves as a coordination point for ATP. Residue Thr-19 coordinates Mg(2+). Lys-40 is a catalytic residue. ATP-binding positions include Asp-57, 118 to 121 (EGVG), 178 to 179 (NH), and 211 to 213 (AHL). The Mg(2+) site is built by Asp-57 and Glu-118.

The protein belongs to the dethiobiotin synthetase family. As to quaternary structure, homodimer. Requires Mg(2+) as cofactor.

Its subcellular location is the cytoplasm. It carries out the reaction (7R,8S)-7,8-diammoniononanoate + CO2 + ATP = (4R,5S)-dethiobiotin + ADP + phosphate + 3 H(+). Its pathway is cofactor biosynthesis; biotin biosynthesis; biotin from 7,8-diaminononanoate: step 1/2. Catalyzes a mechanistically unusual reaction, the ATP-dependent insertion of CO2 between the N7 and N8 nitrogen atoms of 7,8-diaminopelargonic acid (DAPA, also called 7,8-diammoniononanoate) to form a ureido ring. The chain is ATP-dependent dethiobiotin synthetase BioD from Burkholderia ambifaria (strain MC40-6).